Here is a 195-residue protein sequence, read N- to C-terminus: MTKTIDFYFDFISPFSYLAQVKLPDLARRTGCVIEYRPIDIPEAKIAAGNYGPSNREVVPKIKVMMADLERWAAKYEVPLTFPASFACSDWNCAALYARGQDQAEAFVTAAYHRIWGIGIDPRDQNELRGCAEDVGLDADALCEFVRSPAGQGEYRKARTQAYQRGVFGAPMMFVDDQIFWGNDRLDFLESYLLD.

S13 (nucleophile) is an active-site residue. S13 contacts glutathione. Residues K45 and 55–56 (NR) each bind substrate. Residue 181–184 (WGND) coordinates glutathione.

It belongs to the GST superfamily. NadH family. Requires glutathione as cofactor.

It catalyses the reaction 2-hydroxychromene-2-carboxylate = (3E)-4-(2-hydroxyphenyl)-2-oxobut-3-enoate. With respect to regulation, activated by salicylate. Functionally, involved in the naphthalene and naphthalenesulfonate catabolic pathway. Catalyzes the reversible glutathione-dependent isomerization of 2-hydroxychromene-2-carboxylate (HCCA) to trans-O-hydroxybenzylidenepyruvate (THBPA). It can also use 2-hydroxybenzo[g]chromene-2-carboxylate as substrate. This is 2-hydroxychromene-2-carboxylate isomerase (nsaD) from Sphingobium xenophagum.